The chain runs to 322 residues: Phosphatidylserine decarboxylase proenzyme (322 aa).

Residues Asp-90, His-147, and Ser-254 each act as charge relay system; for autoendoproteolytic cleavage activity in the active site. Ser-254 (schiff-base intermediate with substrate; via pyruvic acid; for decarboxylase activity) is an active-site residue. Ser-254 carries the post-translational modification Pyruvic acid (Ser); by autocatalysis. The interval 297–322 is disordered; sequence PAPLPAEEIKAEHDASPLVDNKKDDT. Basic and acidic residues predominate over residues 303–322; that stretch reads EEIKAEHDASPLVDNKKDDT.

This sequence belongs to the phosphatidylserine decarboxylase family. PSD-B subfamily. Prokaryotic type I sub-subfamily. In terms of assembly, heterodimer of a large membrane-associated beta subunit and a small pyruvoyl-containing alpha subunit. Pyruvate is required as a cofactor. In terms of processing, is synthesized initially as an inactive proenzyme. Formation of the active enzyme involves a self-maturation process in which the active site pyruvoyl group is generated from an internal serine residue via an autocatalytic post-translational modification. Two non-identical subunits are generated from the proenzyme in this reaction, and the pyruvate is formed at the N-terminus of the alpha chain, which is derived from the carboxyl end of the proenzyme. The autoendoproteolytic cleavage occurs by a canonical serine protease mechanism, in which the side chain hydroxyl group of the serine supplies its oxygen atom to form the C-terminus of the beta chain, while the remainder of the serine residue undergoes an oxidative deamination to produce ammonia and the pyruvoyl prosthetic group on the alpha chain. During this reaction, the Ser that is part of the protease active site of the proenzyme becomes the pyruvoyl prosthetic group, which constitutes an essential element of the active site of the mature decarboxylase.

The protein resides in the cell membrane. It carries out the reaction a 1,2-diacyl-sn-glycero-3-phospho-L-serine + H(+) = a 1,2-diacyl-sn-glycero-3-phosphoethanolamine + CO2. It participates in phospholipid metabolism; phosphatidylethanolamine biosynthesis; phosphatidylethanolamine from CDP-diacylglycerol: step 2/2. Functionally, catalyzes the formation of phosphatidylethanolamine (PtdEtn) from phosphatidylserine (PtdSer). The protein is Phosphatidylserine decarboxylase proenzyme of Salmonella typhi.